The following is a 111-amino-acid chain: Phosphoribosyl-ATP pyrophosphatase (111 aa).

Belongs to the PRA-PH family.

It is found in the cytoplasm. It carries out the reaction 1-(5-phospho-beta-D-ribosyl)-ATP + H2O = 1-(5-phospho-beta-D-ribosyl)-5'-AMP + diphosphate + H(+). It participates in amino-acid biosynthesis; L-histidine biosynthesis; L-histidine from 5-phospho-alpha-D-ribose 1-diphosphate: step 2/9. This Pseudomonas aeruginosa (strain ATCC 15692 / DSM 22644 / CIP 104116 / JCM 14847 / LMG 12228 / 1C / PRS 101 / PAO1) protein is Phosphoribosyl-ATP pyrophosphatase (hisE).